Consider the following 815-residue polypeptide: cGMP-specific 3',5'-cyclic phosphodiesterase delta (815 aa).

The Cytoplasmic portion of the chain corresponds to 1–56 (MNEYNNDNMEQEKEKKKEEQKYKNIIKKEYFIFPRLYDKNKEIEYNKLRIHNIKEY). A helical membrane pass occupies residues 57 to 77 (ICIHLTISLFIILIECFVFSF). Topologically, residues 78 to 86 (NLNIKDTTY) are extracellular. Residues 87-107 (VEICVVIFSILNCLMHIVVLI) form a helical membrane-spanning segment. Topologically, residues 108–120 (KMYFFTSESVYTK) are cytoplasmic. Residues 121–141 (GVFIGYIVLNQVFQFLSLYFF) traverse the membrane as a helical segment. Residues 142 to 160 (TKRNEQSKNDIAHLKYYDN) lie on the Extracellular side of the membrane. The helical transmembrane segment at 161-181 (SFNLYVHFFVDSVFILCLPAL) threads the bilayer. Over 182–183 (SF) the chain is Cytoplasmic. A helical membrane pass occupies residues 184–204 (FLSVLFMMMFLCLNILLINMI). Residues 205-210 (KFNKTN) lie on the Extracellular side of the membrane. A glycan (N-linked (GlcNAc...) asparagine) is linked at asparagine 207. Residues 211-231 (YGSDIYHICLLSVVLLMFLIL) traverse the membrane as a helical segment. Residues 232-815 (RYMMEERNRL…FKEEIKHGKL (584 aa)) lie on the Cytoplasmic side of the membrane. In terms of domain architecture, PDEase spans 384–762 (YEVEVLKNIK…QTWRLIEKNI (379 aa)). The active-site Proton donor is histidine 459. 459–463 (HNANH) is a binding site for 3',5'-cyclic GMP. A divalent metal cation-binding residues include histidine 463, histidine 499, aspartate 500, and aspartate 616. Aspartate 500, aspartate 616, and glutamine 715 together coordinate 3',5'-cyclic GMP.

Belongs to the cyclic nucleotide phosphodiesterase family. It depends on a divalent metal cation as a cofactor.

The protein resides in the membrane. It catalyses the reaction 3',5'-cyclic GMP + H2O = GMP + H(+). Its pathway is purine metabolism; 3',5'-cyclic GMP degradation; GMP from 3',5'-cyclic GMP: step 1/1. Its function is as follows. Specifically hydrolyzes the second messenger cGMP, which is a key regulator of many important physiological processes. Probably by regulating cGMP levels, required for activation of gametogenesis. This chain is cGMP-specific 3',5'-cyclic phosphodiesterase delta, found in Plasmodium falciparum (isolate 3D7).